A 286-amino-acid polypeptide reads, in one-letter code: DNA-directed RNA polymerase subunit Rpo3 (286 aa).

The protein belongs to the archaeal Rpo3/eukaryotic RPB3 RNA polymerase subunit family. In terms of assembly, part of the RNA polymerase complex.

It is found in the cytoplasm. It carries out the reaction RNA(n) + a ribonucleoside 5'-triphosphate = RNA(n+1) + diphosphate. Functionally, DNA-dependent RNA polymerase (RNAP) catalyzes the transcription of DNA into RNA using the four ribonucleoside triphosphates as substrates. The protein is DNA-directed RNA polymerase subunit Rpo3 of Aeropyrum pernix (strain ATCC 700893 / DSM 11879 / JCM 9820 / NBRC 100138 / K1).